The primary structure comprises 157 residues: MSDEEHTFETADAGSSATYPMQCSALRKNGFVVIKSRPCKIVDMSTSKTGKHGHAKVHLVAIDIFTGKKLEDLSPSTHNMEVPVVKRNEYQLLDIDDGFLSLMNMDGDTKDDVKAPEGELGDSLQTAFDEGKDLMVTIISAMGEEAAISFKEAARTD.

N-acetylserine is present on serine 2. Residue serine 2 is modified to Phosphoserine. Phosphothreonine occurs at positions 7 and 10. Lysine 51 is subject to Hypusine. Serine 74 is modified (phosphoserine). Lysine 86 participates in a covalent cross-link: Glycyl lysine isopeptide (Lys-Gly) (interchain with G-Cter in ubiquitin).

The protein belongs to the eIF-5A family. In terms of assembly, homodimer. Binds to 80S ribosomes. Actively translating ribosomes show mutually exclusive binding of eIF5a (HYP2 or ANB1) and EFT1/eEF2. Interacts with DYS1 and LIA1. In terms of processing, lys-51 undergoes hypusination, a unique post-translational modification that consists in the addition of a butylamino group from spermidine to lysine side chain, leading to the formation of the unusual amino acid hypusine. eIF-5As are the only known proteins to undergo this modification, which is essential for their function.

It localises to the cytoplasm. Functionally, translation factor that promotes translation elongation and termination, particularly upon ribosome stalling at specific amino acid sequence contexts. Binds between the exit (E) and peptidyl (P) site of the ribosome and promotes rescue of stalled ribosome: specifically required for efficient translation of polyproline-containing peptides as well as other motifs that stall the ribosome. Acts as a ribosome quality control (RQC) cofactor by joining the RQC complex to facilitate peptidyl transfer during CAT tailing step. Involved in actin dynamics and cell cycle progression, mRNA decay and probably in a pathway involved in stress response and maintenance of cell wall integrity. This Saccharomyces cerevisiae (strain ATCC 204508 / S288c) (Baker's yeast) protein is Eukaryotic translation initiation factor 5A-1 (HYP2).